The following is a 235-amino-acid chain: NAD(P)H-hydrate epimerase (235 aa).

Residues 18–221 (AAKIDEQLFS…GLVEEHGLQM (204 aa)) form the YjeF N-terminal domain. (6S)-NADPHX is bound at residue 65–69 (NNGGD). K(+) is bound by residues Asn-66 and Asp-127. (6S)-NADPHX is bound by residues 131-137 (GFSFKPP) and Asp-160. Ser-163 contacts K(+).

It belongs to the NnrE/AIBP family. K(+) is required as a cofactor.

The enzyme catalyses (6R)-NADHX = (6S)-NADHX. It catalyses the reaction (6R)-NADPHX = (6S)-NADPHX. Catalyzes the epimerization of the S- and R-forms of NAD(P)HX, a damaged form of NAD(P)H that is a result of enzymatic or heat-dependent hydration. This is a prerequisite for the S-specific NAD(P)H-hydrate dehydratase to allow the repair of both epimers of NAD(P)HX. This chain is NAD(P)H-hydrate epimerase, found in Caenorhabditis briggsae.